Consider the following 118-residue polypeptide: U16-barytoxin-Tl1c (118 aa).

A signal peptide spans 1–16 (MKTIIVFLSFLVLVLA). Positions 17–76 (TKFGDANEGVNREQTKEVIQNEFRGDFLNEMAAMSLLQQLEAIESALLEKEADRNSRQKR) are excised as a propeptide. Intrachain disulfides connect cysteine 77/cysteine 92, cysteine 84/cysteine 97, and cysteine 91/cysteine 112.

Belongs to the neurotoxin 14 (magi-1) family. 06 (ICK-Trit) subfamily. Expressed by the venom gland.

It is found in the secreted. Functionally, ion channel inhibitor. The chain is U16-barytoxin-Tl1c from Trittame loki (Brush-footed trapdoor spider).